The following is an 800-amino-acid chain: Probable replication endonuclease from prophage-like region (800 aa).

Active-site O-(5'-phospho-DNA)-tyrosine intermediate residues include tyrosine 503 and tyrosine 507.

It belongs to the phage GPA family.

In terms of biological role, possible endonuclease which induces a single-strand cut and initiates DNA replication. The chain is Probable replication endonuclease from prophage-like region from Salmonella paratyphi A (strain ATCC 9150 / SARB42).